We begin with the raw amino-acid sequence, 151 residues long: MKKIELRPNGTKLVHTVNELPPETDQSFGKECDINFIVKKFIKTGQITHLARRQGFYGDQSSIPDFQTAMDTVTKAQQAFDELPAHMRKRFANSPHELMQFLQDPKNRDEAISLGLMEMVETPQQAPQSTTNQTTTKPAPASGEPTPVPTP.

The interval 120 to 151 (VETPQQAPQSTTNQTTTKPAPASGEPTPVPTP) is disordered. Over residues 122–137 (TPQQAPQSTTNQTTTK) the composition is skewed to polar residues.

The protein belongs to the microvidae B protein family.

The protein localises to the host cytoplasm. Its function is as follows. Participates in the assembly of the viral procapsid in the cytoplasm. Internal scaffolding protein VP3 is released from the procapsid upon genome packaging, possibly through affinity displacement by the protein VP8, or by proteolysis. The polypeptide is Internal scaffolding protein VP3 (Bdellovibrio bacteriovorus (Bacteriophage phiMH2K)).